The primary structure comprises 309 residues: Ecto-ADP-ribosyltransferase 5 (309 aa).

The signal sequence occupies residues 1–23 (MILEDLLMVLSCLSLHALWKVRA). Residues C43 and C259 are joined by a disulfide bond. The 191-residue stretch at 63-253 (ALLRESWEAA…IVTLWSYDQT (191 aa)) folds into the TR mART core domain. Residue Y100 participates in NAD(+) binding. The N-linked (GlcNAc...) asparagine glycan is linked to N102. 2 residues coordinate NAD(+): R161 and Q181. The active site involves R161. S184 is a catalytic residue. N197 carries an N-linked (GlcNAc...) asparagine glycan. S215 contacts NAD(+). E222 is a catalytic residue.

The protein belongs to the Arg-specific ADP-ribosyltransferase family. Abundantly expressed in testis. Lower levels in cardiac and skeletal muscle.

It is found in the secreted. The protein resides in the membrane. The catalysed reaction is L-arginyl-[protein] + NAD(+) = N(omega)-(ADP-D-ribosyl)-L-arginyl-[protein] + nicotinamide + H(+). This Mus musculus (Mouse) protein is Ecto-ADP-ribosyltransferase 5 (Art5).